The following is a 1692-amino-acid chain: Fatty acid synthase alpha subunit hexA (1692 aa).

Positions 44–80 (AVEEPVDETPAPETAPERPPLSRAKTAAVKPQETAAP) are disordered. In terms of domain architecture, Carrier spans 90-174 (LSAEEIVRAL…RVSSALLSKL (85 aa)). Position 125 is an O-(pantetheine 4'-phosphoryl)serine (Ser-125). The tract at residues 508–746 (FAGKNILITG…IAMLMTPELV (239 aa)) is ketoreductase (KR) domain. Residues 948 to 1430 (KEYLHEVAVE…QKGGQVVGVA (483 aa)) form the Ketosynthase family 3 (KS3) domain. The For beta-ketoacyl synthase activity role is filled by Cys-1135. The tract at residues 1263–1287 (GQAQLDKSSPSTNTTSRTSSVSLAR) is disordered. The span at 1270 to 1284 (SSPSTNTTSRTSSVS) shows a compositional bias: low complexity. Active-site for beta-ketoacyl synthase activity residues include His-1315 and His-1356. Position 1569 (Asp-1569) interacts with Mg(2+). Residues 1569–1571 (DLV), 1615–1625 (EAVFKCLHTQT), 1639–1642 (KSDN), and 1668–1670 (ISH) contribute to the acetyl-CoA site. Ser-1669 contributes to the Mg(2+) binding site.

It belongs to the thiolase-like superfamily. Fungal fatty acid synthetase subunit alpha family. As to quaternary structure, [Alpha(6)beta(6)] hexamers of two multifunctional subunits (alpha and beta). 4'-phosphopantetheine is transferred from CoA to a specific serine of the acyl carrier domain by the C-terminal PPT domain. This modification is essential for activity because fatty acids are bound in thioester linkage to the sulfhydryl of the prosthetic group.

It catalyses the reaction acetyl-CoA + n malonyl-CoA + 2n NADPH + 4n H(+) = a long-chain-acyl-CoA + n CoA + n CO2 + 2n NADP(+).. The enzyme catalyses a fatty acyl-[ACP] + malonyl-[ACP] + H(+) = a 3-oxoacyl-[ACP] + holo-[ACP] + CO2. The catalysed reaction is a (3R)-hydroxyacyl-[ACP] + NADP(+) = a 3-oxoacyl-[ACP] + NADPH + H(+). It participates in mycotoxin biosynthesis. Fatty acid synthase alpha subunit; part of the fragmented gene cluster that mediates the biosynthesis of dothistromin (DOTH), a polyketide toxin very similar in structure to the aflatoxin precursor, versicolorin B. The first step of the pathway is the conversion of acetate to norsolorinic acid (NOR) and requires the fatty acid synthase subunits hexA and hexB, as well as the polyketide synthase pksA. PksA combines a hexanoyl starter unit and 7 malonyl-CoA extender units to synthesize the precursor NOR. The hexanoyl starter unit is provided to the acyl-carrier protein (ACP) domain by the fungal fatty acid synthase hexA/hexB. The second step is the conversion of NOR to averantin (AVN) and requires the norsolorinic acid ketoreductase nor1, which catalyzes the dehydration of norsolorinic acid to form (1'S)-averantin. The cytochrome P450 monooxygenase avnA then catalyzes the hydroxylation of AVN to 5'hydroxyaverantin (HAVN). The next step is performed by adhA that transforms HAVN to averufin (AVF). Averufin might then be converted to hydroxyversicolorone by cypX and avfA. Hydroxyversicolorone is further converted versiconal hemiacetal acetate (VHA) by moxY. VHA is then the substrate for the versiconal hemiacetal acetate esterase est1 to yield versiconal (VAL). Versicolorin B synthase vbsA then converts VAL to versicolorin B (VERB) by closing the bisfuran ring. Then, the activity of the versicolorin B desaturase verB leads to versicolorin A (VERA). DotB, a predicted chloroperoxidase, may perform epoxidation of the A-ring of VERA. Alternatively, a cytochrome P450, such as cypX or avnA could catalyze this step. It is also possible that another, uncharacterized, cytochrome P450 enzyme is responsible for this step. Opening of the epoxide could potentially be achieved by the epoxide hydrolase epoA. However, epoA seems not to be required for DOTH biosynthesis, but other epoxide hydrolases may have the ability to complement this hydrolysis. Alternatively, opening of the epoxide ring could be achieved non-enzymatically. The next step is the deoxygenation of ring A to yield the 5,8-dihydroxyanthraquinone which is most likely catalyzed by the NADPH dehydrogenase encoded by ver1. The last stages of DOTH biosynthesis are proposed to involve hydroxylation of the bisfuran. OrdB and norB might have oxidative roles here. An alternative possibility is that cytochrome P450 monoogenases such as avnA and cypX might perform these steps in addition to previously proposed steps. This Dothistroma septosporum (strain NZE10 / CBS 128990) (Red band needle blight fungus) protein is Fatty acid synthase alpha subunit hexA.